We begin with the raw amino-acid sequence, 278 residues long: Hydroxyethylthiazole kinase (278 aa).

Methionine 46 is a substrate binding site. Residues arginine 122 and threonine 168 each coordinate ATP. Glycine 195 serves as a coordination point for substrate.

It belongs to the Thz kinase family. Requires Mg(2+) as cofactor.

The enzyme catalyses 5-(2-hydroxyethyl)-4-methylthiazole + ATP = 4-methyl-5-(2-phosphooxyethyl)-thiazole + ADP + H(+). Its pathway is cofactor biosynthesis; thiamine diphosphate biosynthesis; 4-methyl-5-(2-phosphoethyl)-thiazole from 5-(2-hydroxyethyl)-4-methylthiazole: step 1/1. In terms of biological role, catalyzes the phosphorylation of the hydroxyl group of 4-methyl-5-beta-hydroxyethylthiazole (THZ). The chain is Hydroxyethylthiazole kinase from Chloroflexus aggregans (strain MD-66 / DSM 9485).